A 1578-amino-acid chain; its full sequence is Cilia- and flagella-associated protein 74 (1578 aa).

Acidic residues predominate over residues 1 to 14 (MEEPTVQFSDEDLV). Disordered regions lie at residues 1 to 21 (MEEP…PPMD) and 33 to 67 (EVER…TTKD). Positions 33–65 (EVERPSEGLEDEGSHSSAKKESKGAEKMRKSTT) are enriched in basic and acidic residues. Coiled-coil stretches lie at residues 103–156 (RQRM…QSKI) and 330–378 (KYLF…RRQH).

Belongs to the CFAP74 family.

The protein localises to the cytoplasm. It localises to the cytoskeleton. Its subcellular location is the cilium axoneme. It is found in the flagellum axoneme. Functionally, as part of the central apparatus of the cilium axoneme may play a role in cilium movement. May play an important role in sperm architecture and function. This Mus musculus (Mouse) protein is Cilia- and flagella-associated protein 74.